The primary structure comprises 414 residues: Putative gustatory receptor 47b (414 aa).

Topologically, residues 1-5 (MQRDD) are cytoplasmic. The chain crosses the membrane as a helical span at residues 6-26 (GFVYCYGNLYSLLLYWGLVTI). The Extracellular segment spans residues 27–40 (RVRSPDRGGAFSNR). Residues 41 to 61 (WTVCYALFTRSFMVICFMATV) traverse the membrane as a helical segment. Residues 62–142 (MTKLRDPEMS…QWNYRRARLK (81 aa)) lie on the Cytoplasmic side of the membrane. A helical membrane pass occupies residues 143–163 (YWYGTVIVGFCFFSFSISLIF). The Extracellular segment spans residues 164-182 (DTTRCTCGIPSTLLMAFTY). Residues 183 to 203 (TLLTSSVGLLGFVHIGIMDFI) traverse the membrane as a helical segment. Residues 204-249 (RVRLRLVQQLLHQLYQADDSSEVHERIAYLFEMSKRCSFLLAELNG) are Cytoplasmic-facing. A helical transmembrane segment spans residues 250 to 270 (VFGFAAAAGIFYDFTIMTCFV). The Extracellular portion of the chain corresponds to 271-291 (YVICQKLLEREPWDPEYVYML). Residues 292 to 312 (LHVAIHTYKVVITSTYGYLLL) traverse the membrane as a helical segment. The Cytoplasmic portion of the chain corresponds to 313–364 (REKRNCMHLLSQYSRYFSGQDVARRKTEDFQHWRMHNRQAAMVGSTTLLSVS). The chain crosses the membrane as a helical span at residues 365-385 (TIYLVYNGMANYVIILVQLLF). At 386–414 (QQQQIKDHQLTSGKDVDIVGPMGPITHMD) the chain is on the extracellular side.

The protein belongs to the insect chemoreceptor superfamily. Gustatory receptor (GR) family. Gr57a subfamily. In terms of tissue distribution, expressed in neurons of the terminal external chemosensory organ of larvae.

It localises to the cell membrane. Functionally, probable gustatory receptor which mediates acceptance or avoidance behavior, depending on its substrates. The protein is Putative gustatory receptor 47b (Gr47b) of Drosophila melanogaster (Fruit fly).